A 257-amino-acid chain; its full sequence is Major prion protein (257 aa).

Positions 1 to 24 are cleaved as a signal peptide; sequence MVKSHIGGWILLLFVATWSDVGLC. The tract at residues 25–234 is interaction with GRB2, ERI3 and SYN1; the sequence is KKRPKPGGWN…ESEAYYQRGA (210 aa). A disordered region spans residues 28-110; it reads PKPGGWNTGG…GQWGKPNKPK (83 aa). 2 stretches are compositionally biased toward gly residues: residues 33-48 and 55-101; these read WNTG…GSPG and QGGG…GSHG. 5 repeat units span residues 54–62, 63–70, 71–78, 79–86, and 87–95. A 5 X 8 AA tandem repeats of P-H-G-G-G-W-G-Q region spans residues 54 to 95; the sequence is PQGGGGWGQPHGGGWGQPHGGGWGQPHGGGWGQPHGGGGWGQ. Cu(2+) is bound by residues His-64, Gly-65, Gly-66, His-72, Gly-73, Gly-74, His-80, Gly-81, Gly-82, His-88, Gly-90, and Gly-91. A disulfide bond links Cys-183 and Cys-218. Asn-185 and Asn-201 each carry an N-linked (GlcNAc...) asparagine glycan. Ala-234 carries the GPI-anchor amidated alanine lipid modification. A propeptide spans 235-257 (removed in mature form); sequence SAILFSPPPVILLISLLILLIVG.

It belongs to the prion family. In terms of assembly, monomer and homodimer. Has a tendency to aggregate into amyloid fibrils containing a cross-beta spine, formed by a steric zipper of superposed beta-strands. Soluble oligomers may represent an intermediate stage on the path to fibril formation. Copper binding may promote oligomerization. Interacts with GRB2, APP, ERI3/PRNPIP and SYN1. Mislocalized cytosolically exposed PrP interacts with MGRN1; this interaction alters MGRN1 subcellular location and causes lysosomal enlargement. Interacts with KIAA1191.

Its subcellular location is the cell membrane. It localises to the golgi apparatus. In terms of biological role, its primary physiological function is unclear. Has cytoprotective activity against internal or environmental stresses. May play a role in neuronal development and synaptic plasticity. May be required for neuronal myelin sheath maintenance. May play a role in iron uptake and iron homeostasis. Soluble oligomers are toxic to cultured neuroblastoma cells and induce apoptosis (in vitro). Association with GPC1 (via its heparan sulfate chains) targets PRNP to lipid rafts. Also provides Cu(2+) or Zn(2+) for the ascorbate-mediated GPC1 deaminase degradation of its heparan sulfate side chains. This chain is Major prion protein, found in Vulpes lagopus (Arctic fox).